The sequence spans 381 residues: GDSL esterase/lipase At3g48460 (381 aa).

A signal peptide spans 1 to 26 (MSSSISPLLTTAISVAILLFSTISTA). The Nucleophile role is filled by S45. 3 N-linked (GlcNAc...) asparagine glycosylation sites follow: N112, N140, and N258. Active-site residues include D344 and H347.

The protein belongs to the 'GDSL' lipolytic enzyme family.

It is found in the secreted. This chain is GDSL esterase/lipase At3g48460, found in Arabidopsis thaliana (Mouse-ear cress).